The sequence spans 376 residues: Queuine tRNA-ribosyltransferase (376 aa).

Asp-89 (proton acceptor) is an active-site residue. Substrate contacts are provided by residues 89–93 (DSGGF), Asp-143, Gln-194, and Gly-221. The interval 252–258 (GVGTPAN) is RNA binding. Asp-271 acts as the Nucleophile in catalysis. Zn(2+)-binding residues include Cys-309, Cys-311, Cys-314, and His-340.

The protein belongs to the queuine tRNA-ribosyltransferase family. As to quaternary structure, homodimer. Within each dimer, one monomer is responsible for RNA recognition and catalysis, while the other monomer binds to the replacement base PreQ1. Requires Zn(2+) as cofactor.

It carries out the reaction 7-aminomethyl-7-carbaguanine + guanosine(34) in tRNA = 7-aminomethyl-7-carbaguanosine(34) in tRNA + guanine. Its pathway is tRNA modification; tRNA-queuosine biosynthesis. Catalyzes the base-exchange of a guanine (G) residue with the queuine precursor 7-aminomethyl-7-deazaguanine (PreQ1) at position 34 (anticodon wobble position) in tRNAs with GU(N) anticodons (tRNA-Asp, -Asn, -His and -Tyr). Catalysis occurs through a double-displacement mechanism. The nucleophile active site attacks the C1' of nucleotide 34 to detach the guanine base from the RNA, forming a covalent enzyme-RNA intermediate. The proton acceptor active site deprotonates the incoming PreQ1, allowing a nucleophilic attack on the C1' of the ribose to form the product. After dissociation, two additional enzymatic reactions on the tRNA convert PreQ1 to queuine (Q), resulting in the hypermodified nucleoside queuosine (7-(((4,5-cis-dihydroxy-2-cyclopenten-1-yl)amino)methyl)-7-deazaguanosine). In Clostridium kluyveri (strain NBRC 12016), this protein is Queuine tRNA-ribosyltransferase.